Reading from the N-terminus, the 785-residue chain is Phenylalanine--tRNA ligase beta subunit (785 aa).

Residues 39 to 147 (FPIPRGVVFA…DALPPGTPLA (109 aa)) form the tRNA-binding domain. One can recognise a B5 domain in the interval 399–474 (KPPEAIPFRP…RIQGYETIPL (76 aa)). Mg(2+) contacts are provided by Asp452, Asp458, Glu461, and Glu462. In terms of domain architecture, FDX-ACB spans 688–780 (SRHPAAFRDL…ALRARGFGLR (93 aa)).

Belongs to the phenylalanyl-tRNA synthetase beta subunit family. Type 1 subfamily. In terms of assembly, tetramer of two alpha and two beta subunits. Mg(2+) serves as cofactor.

Its subcellular location is the cytoplasm. It catalyses the reaction tRNA(Phe) + L-phenylalanine + ATP = L-phenylalanyl-tRNA(Phe) + AMP + diphosphate + H(+). This Thermus thermophilus (strain ATCC BAA-163 / DSM 7039 / HB27) protein is Phenylalanine--tRNA ligase beta subunit.